Reading from the N-terminus, the 141-residue chain is Nucleoside diphosphate kinase (141 aa).

The ATP site is built by lysine 11, phenylalanine 59, arginine 87, threonine 93, arginine 104, and asparagine 114. The active-site Pros-phosphohistidine intermediate is histidine 117.

Belongs to the NDK family. As to quaternary structure, homotetramer. Mg(2+) serves as cofactor.

It localises to the cytoplasm. The enzyme catalyses a 2'-deoxyribonucleoside 5'-diphosphate + ATP = a 2'-deoxyribonucleoside 5'-triphosphate + ADP. It carries out the reaction a ribonucleoside 5'-diphosphate + ATP = a ribonucleoside 5'-triphosphate + ADP. In terms of biological role, major role in the synthesis of nucleoside triphosphates other than ATP. The ATP gamma phosphate is transferred to the NDP beta phosphate via a ping-pong mechanism, using a phosphorylated active-site intermediate. In Chromobacterium violaceum (strain ATCC 12472 / DSM 30191 / JCM 1249 / CCUG 213 / NBRC 12614 / NCIMB 9131 / NCTC 9757 / MK), this protein is Nucleoside diphosphate kinase.